Reading from the N-terminus, the 260-residue chain is Protein FAM220A (260 aa).

Disordered regions lie at residues 1 to 75 and 129 to 158; these read MKAG…SKAS and GSDWPGREPRATDNRGQYLKGESWVSGRPG. Residues 35-47 are compositionally biased toward polar residues; the sequence is RNPSPSVVPSWTD.

In terms of assembly, interacts with transcriptional activator STAT3; the interaction occurs in both the nucleus and the cytoplasm, is enhanced by IL6 and promotes STAT3 dephosphorylation, leading to negative regulation of STAT3 transcriptional activator activity. Can interact with both unphosphorylated and phosphorylated STAT3 but interacts preferentially with phosphorylated STAT3 in the nucleus. Interacts with protein phosphatase PTPN2/TC45; this promotes interaction of PTPN2 with STAT3, leading to dephosphorylation of STAT3 by PTPN2. Expressed at high levels in the testis where it is detected within elongated spermatids during the late stages (steps 9-16) of haploid germ cell development and in the tubular lumen (at protein level).

The protein resides in the nucleus. It localises to the cytoplasm. The protein localises to the cytoplasmic vesicle. Its subcellular location is the secretory vesicle. It is found in the acrosome. Promotes dephosphorylation of transcriptional activator STAT3 by interacting with both STAT3 and protein phosphatase PTPN2. This promotes interaction of PTPN2 with STAT3 and mediates STAT3 dephosphorylation by PTPN2, leading to negative regulation of STAT3 transcriptional activator activity. May be required for spermiogenesis or sperm function. The sequence is that of Protein FAM220A from Mus musculus (Mouse).